The chain runs to 622 residues: Sodium/potassium/calcium exchanger 4 (622 aa).

The signal sequence occupies residues 1-38 (MALRGLIRQSKVRRRREMLPQQVGFVCAVLALVCCASG). The Extracellular portion of the chain corresponds to 39-97 (LFGSLGHKTASAGKHVLLDTWRNRKLMAPINGTPLAKNCTDPAIHEFPTDLFSNKERQH). Asn-76 carries N-linked (GlcNAc...) asparagine glycosylation. A helical transmembrane segment spans residues 98 to 118 (GAVLLHILGALYMFYALAIVC). Over 119 to 142 (DDFFVPSLEKICEKLHLSEDVAGA) the chain is Cytoplasmic. One copy of the Alpha-1 repeat lies at 139-179 (VAGATFMAAGSSTPELFASVIGVFITHGDVGVGTIVGSAVF). The helical transmembrane segment at 143-163 (TFMAAGSSTPELFASVIGVFI) threads the bilayer. The Extracellular portion of the chain corresponds to 164–172 (THGDVGVGT). The helical transmembrane segment at 173 to 193 (IVGSAVFNILCIIGVCGLFAG) threads the bilayer. Topologically, residues 194-200 (QVVRLTW) are cytoplasmic. A helical transmembrane segment spans residues 201-221 (WAVCRDSVYYTLSVIVLIAFI). At 222–224 (YDE) the chain is on the extracellular side. The helical transmembrane segment at 225–245 (EIVWWEGLVLIILYVFYILIM) threads the bilayer. Residues 246-457 (KYNMKMQTFF…RWEKFFMVTF (212 aa)) lie on the Cytoplasmic side of the membrane. The tract at residues 358–408 (ANGVNSKPLQNGRHENMENGNVPVENPEDPQQGQEQQPPPQPPPPEPESVE) is disordered. Over residues 394 to 404 (QPPPQPPPPEP) the composition is skewed to pro residues. The helical transmembrane segment at 458–478 (ITATLWIAVFSYLMVWLVTII) threads the bilayer. Gly-479 is a topological domain (extracellular). Residues 480 to 500 (YTLGIPDVIMGITFLAAGTSV) traverse the membrane as a helical segment. An Alpha-2 repeat occupies 495-526 (AAGTSVPDCMASLIVARQGLGDMAVSNTIGSN). The Cytoplasmic portion of the chain corresponds to 501–526 (PDCMASLIVARQGLGDMAVSNTIGSN). The helical transmembrane segment at 527 to 547 (VFDILVGLGIPWGLQTMVINY) threads the bilayer. Residues 548 to 557 (GSTVKINSRG) are Extracellular-facing. A helical membrane pass occupies residues 558–578 (LVYSVVLLLGSVALTVLGIHL). At 579 to 586 (NKWRLDRK) the chain is on the cytoplasmic side. The helical transmembrane segment at 587–607 (LGIYVLVLYAVFLCFSIMIEF) threads the bilayer. Topologically, residues 608–622 (NVFTFVNLPMCREDD) are extracellular.

This sequence belongs to the Ca(2+):cation antiporter (CaCA) (TC 2.A.19) family. SLC24A subfamily. In terms of tissue distribution, expressed in late secretory-stage and maturation-stage ameloblasts, with significantly increased expression during the late stages of amelogenesis (at protein level). Widely expressed in most regions of the brain, including hippocampus, neocortex, thalamus, striatum and olfactory bulb. Expressed in the olfactory sensory neurons.

Its subcellular location is the cell membrane. The protein resides in the cytoplasm. The enzyme catalyses Ca(2+)(out) + K(+)(out) + 4 Na(+)(in) = Ca(2+)(in) + K(+)(in) + 4 Na(+)(out). In terms of biological role, calcium, potassium:sodium antiporter that transports 1 Ca(2+) and 1 K(+) in exchange for 4 Na(+). Controls the rapid response termination and proper regulation of adaptation in olfactory sensory neurons (OSNs) which subsequently influences how odor information is encoded and perceived. May play a role in calcium transport during amelogenesis. The chain is Sodium/potassium/calcium exchanger 4 from Mus musculus (Mouse).